We begin with the raw amino-acid sequence, 224 residues long: UPF0173 metal-dependent hydrolase Memar_1421 (224 aa).

Belongs to the UPF0173 family.

The protein is UPF0173 metal-dependent hydrolase Memar_1421 of Methanoculleus marisnigri (strain ATCC 35101 / DSM 1498 / JR1).